Reading from the N-terminus, the 579-residue chain is Zinc metalloproteinase nas-11 (579 aa).

Positions 1 to 17 (MTPSLVFLIVVIVVVEG) are cleaved as a signal peptide. Positions 18–328 (QGWRPWDRFN…AAPGSSRLKK (311 aa)) are excised as a propeptide. The tract at residues 35–58 (WGGNNWGTRQRNQEPHDIPPPVPP) is disordered. The N-linked (GlcNAc...) asparagine glycan is linked to N256. Positions 293–312 (GDDEIPLPDADTDDEDDDDS) are enriched in acidic residues. Residues 293–323 (GDDEIPLPDADTDDEDDDDSTNSASGAAPGS) are disordered. Positions 329-536 (SALYFEGNLI…IELLKKMYCQ (208 aa)) constitute a Peptidase M12A domain. Cystine bridges form between C375–C535, C401–C421, C539–C575, C546–C568, and C555–C572. A Zn(2+)-binding site is contributed by H430. E431 is an active-site residue. Residues H434 and H440 each contribute to the Zn(2+) site. A glycan (N-linked (GlcNAc...) asparagine) is linked at N454. The ShKT domain maps to 539–575 (CDDKNVYCGAWALKDLCKNPGHDQYMAANCKKSCGLC).

Zn(2+) serves as cofactor. As to expression, expressed in the anterior part of the intestine, CEP neurons and to a lesser extent in hypodermis.

Its subcellular location is the secreted. Functionally, metalloprotease. The protein is Zinc metalloproteinase nas-11 (nas-11) of Caenorhabditis elegans.